A 385-amino-acid polypeptide reads, in one-letter code: Selenoprotein P (385 aa).

Positions 1 to 19 (MWRSLGLALALCLLPYGGA) are cleaved as a signal peptide. Position 59 (Sec59) is a non-standard amino acid, selenocysteine. A cross-link (cysteinyl-selenocysteine (Sec-Cys); in isoform Se-P1) is located at residues 59–62 (UYLC). Residues Asn83, Asn174, and Asn188 are each glycosylated (N-linked (GlcNAc...) asparagine). Cystine bridges form between Cys168/Cys186 and Cys172/Cys175. Residues 196 to 262 (KTTEPSEEHN…KGQHRQGHLE (67 aa)) form a disordered region. The segment covering 243–258 (LHHHHHHHKHKGQHRQ) has biased composition (basic residues). Sec264 is a non-standard amino acid (selenocysteine). Position 269 is a phosphoserine (Ser269). Residues Sec282, Sec323, Sec335, and Sec357 are each a non-standard amino acid (selenocysteine). Residues 357–385 (UHSQHVSPTEASPNUSUNNKTKKUKUNLN) are disordered. Residues 360–369 (QHVSPTEASP) show a composition bias toward polar residues. An O-linked (Hex...) threonine; partial glycan is attached at Thr365. 4 non-standard amino acids (selenocysteine) are found at residues Sec371, Sec373, Sec380, and Sec382. Positions 376–385 (KTKKUKUNLN) are enriched in basic residues.

This sequence belongs to the selenoprotein P family. Isoform Se-P1 contains several disulfide bridges and a selenide-sulfide bond between Sec-59 and Cys-62. These bonds are speculated to serve as redox-active pairs. Post-translationally, phosphorylation sites are present in the extracellular medium. Widely expressed, mainly by the liver. Secreted in plasma.

It is found in the secreted. Functionally, might be responsible for some of the extracellular antioxidant defense properties of selenium or might be involved in the transport of selenium. May supply selenium to tissues such as brain and testis. In Rattus norvegicus (Rat), this protein is Selenoprotein P.